Here is a 187-residue protein sequence, read N- to C-terminus: dTTP/UTP pyrophosphatase (187 aa).

Catalysis depends on Asp-65, which acts as the Proton acceptor.

It belongs to the Maf family. YhdE subfamily. A divalent metal cation serves as cofactor.

It is found in the cytoplasm. The enzyme catalyses dTTP + H2O = dTMP + diphosphate + H(+). The catalysed reaction is UTP + H2O = UMP + diphosphate + H(+). Functionally, nucleoside triphosphate pyrophosphatase that hydrolyzes dTTP and UTP. May have a dual role in cell division arrest and in preventing the incorporation of modified nucleotides into cellular nucleic acids. This is dTTP/UTP pyrophosphatase from Pyrococcus abyssi (strain GE5 / Orsay).